A 453-amino-acid chain; its full sequence is uncharacterized protein (453 aa).

To B.subtilis YcdB.

This is an uncharacterized protein from Bacillus subtilis (strain 168).